A 989-amino-acid chain; its full sequence is MDRQSLRTTLRAMDASNENGSAKGAKKTTIGSFVRWTFGFNSVPLTTLVTITTVLLGLLVYVSTSVNPPDVTEAQKPLLNYAWAQLGEISRYPHPYFSHDNDRVRQHILKEVYTLAGREHFEGAQIEVDDSQTDIFIQKEDVFDKSAPPGKLTYFEGNNVVVRLSSKNSDKSLGAILLSAHFDSVPSSFGVTDDGAGIATMLAVLKHALAQNEGPKRDIIFNFNNNEEFGLLGAEAFMHHPWAQNVSAFINLEGTGAGGKAILFRASDYGVASHYSAAEMPFASSVYQEGFSNGFIHSQTDYKVYTEGGLRGLDIAFYKPRALYHTRRDNIAETTKNALNHMLVNTIDVTQSMTEADSFDHADQPAVFSDIGGYLFIILPLQYIFVISCLTLAVGPIFVGFLFLLVLRKQINAGTSETILGGWLRSIVSVLVSVVATYFVVETLHLGNELYVVRSFYTPLFAGLGTFIFVNYVLLGFFHFVRPVCDQKLIILLELSVVLWVLLLLSVIHEATHKATGEYHFLILYIVVATASILGLFGHLVTSTETSTFVEGPEDEEDTVDASEATETSPLLPEASPDNAAPSIHGAVDPENQQEDKTLQKIAVSMGYDWSIQFLLVVPITFFVTFGLAASLLDGLHQTPLESEKSADFVYTTITAMSVLVGITFLPFVHKLQVFVPIVVVGVAVTASFVHILSPPFSSNAPAKMRFVQNINLDEGTSYANVLGRQDVLQEVLEYIPSTDTFKPNCSSRGDGVEICNYIAPRPWLIDGEKVSSDGDFAGLPTNLLDVKVVPVNETSSGPFDRFDGRFKISALNNRGCVLRFNTTRFKSGDVETGVSPVKMVTLRHNRVGKTGITTGSGSRFSMFGWTRDPKTGKDEFRSFMHGVDDVTLHKLDWEDPEYDIQLSWIPRWYEVGDPEDEGNEALKNRLGVTVTCSWAEYLDPSSIVDEQGRRRTMDKIPAFTELNNFSPAWSIWSNQGRGLVEVSKYVEL.

The disordered stretch occupies residues 1–25 (MDRQSLRTTLRAMDASNENGSAKGA). Residues 1–41 (MDRQSLRTTLRAMDASNENGSAKGAKKTTIGSFVRWTFGFN) are Cytoplasmic-facing. A helical transmembrane segment spans residues 42-62 (SVPLTTLVTITTVLLGLLVYV). Residues 63–383 (STSVNPPDVT…YLFIILPLQY (321 aa)) are Vacuolar-facing. The Zn(2+) site is built by His181 and Asp193. The active-site Proton acceptor is the Glu227. Zn(2+) is bound at residue Glu228. Asn245 is a glycosylation site (N-linked (GlcNAc...) asparagine). Glu253 and His325 together coordinate Zn(2+). A helical transmembrane segment spans residues 384–404 (IFVISCLTLAVGPIFVGFLFL). The Cytoplasmic portion of the chain corresponds to 405–426 (LVLRKQINAGTSETILGGWLRS). Residues 427–447 (IVSVLVSVVATYFVVETLHLG) traverse the membrane as a helical segment. The Vacuolar portion of the chain corresponds to 448–460 (NELYVVRSFYTPL). Residues 461–481 (FAGLGTFIFVNYVLLGFFHFV) form a helical membrane-spanning segment. The Cytoplasmic segment spans residues 482-488 (RPVCDQK). The helical transmembrane segment at 489–509 (LIILLELSVVLWVLLLLSVIH) threads the bilayer. At 510–520 (EATHKATGEYH) the chain is on the vacuolar side. The helical transmembrane segment at 521-541 (FLILYIVVATASILGLFGHLV) threads the bilayer. Residues 542 to 611 (TSTETSTFVE…IAVSMGYDWS (70 aa)) are Cytoplasmic-facing. The tract at residues 548-576 (TFVEGPEDEEDTVDASEATETSPLLPEAS) is disordered. A compositionally biased stretch (acidic residues) spans 552-561 (GPEDEEDTVD). A helical membrane pass occupies residues 612 to 632 (IQFLLVVPITFFVTFGLAASL). The Vacuolar segment spans residues 633–648 (LDGLHQTPLESEKSAD). The chain crosses the membrane as a helical span at residues 649–669 (FVYTTITAMSVLVGITFLPFV). Residues 670–673 (HKLQ) are Cytoplasmic-facing. Residues 674–694 (VFVPIVVVGVAVTASFVHILS) form a helical membrane-spanning segment. Residues 695–989 (PPFSSNAPAK…LVEVSKYVEL (295 aa)) are Vacuolar-facing. Asn745, Asn793, and Asn822 each carry an N-linked (GlcNAc...) asparagine glycan.

The protein belongs to the peptidase M28 family. Zn(2+) is required as a cofactor.

It localises to the vacuole membrane. May be involved in vacuolar sorting and osmoregulation. This chain is Vacuolar membrane protease, found in Yarrowia lipolytica (strain CLIB 122 / E 150) (Yeast).